Here is a 1301-residue protein sequence, read N- to C-terminus: ABC transporter BEA3 (1301 aa).

The segment at 1–30 is disordered; it reads MGKRTAENSAANGEGEEKHPEIGVDGRPEK. Over residues 15 to 30 the composition is skewed to basic and acidic residues; it reads GEEKHPEIGVDGRPEK. A run of 4 helical transmembrane segments spans residues 54-74, 103-123, 177-197, and 203-223; these read VGVIASIGVGITLPLLNIVFG, LYLLGLFLGRLVLGYITNFAF, LGVFVEYNATMIASIIVAFIY, and LVTFTAVVFITFSVSLVLPYI. The ABC transmembrane type-1 1 domain maps to 54-345; the sequence is VGVIASIGVG…ISTPLLAVSK (292 aa). Residue N229 is glycosylated (N-linked (GlcNAc...) asparagine). 2 consecutive transmembrane segments (helical) span residues 281–301 and 313–333; these read FIALQYGLVFFSSYAAFGLAF and INQLGAIIVVLFSVMMIVTAM. The ABC transporter 1 domain maps to 378–667; it reads IILEDVTFAY…EAGLYYNLVN (290 aa). ATP is bound at residue 413–420; sequence GPSGSGKS. A compositionally biased stretch (basic and acidic residues) spans 442 to 454; that stretch reads VEKPTDKKNNGGK. The segment at 442–461 is disordered; the sequence is VEKPTDKKNNGGKEEDEQEL. Residues N511 and N618 are each glycosylated (N-linked (GlcNAc...) asparagine). Positions 682–708 are disordered; the sequence is VIAKEERPSSVHEKAHTESTIEEKPLE. The 290-residue stretch at 735 to 1024 folds into the ABC transmembrane type-1 2 domain; sequence ALTLFFSACA…ALSFGPNVAQ (290 aa). 6 helical membrane-spanning segments follow: residues 745-765, 779-799, 858-878, 880-900, 961-981, and 987-1007; these read GAAVPFQAWLFAKVIIVFGYL, SLMWTVLAISAGLAYCATFFL, SVFIALWTLMGTIAIALAFAW, LALVSLCVVVPILLAAGYWRM, WVSLLYAFSDSATIGCQAIVL, and LLLSGEYDLESFFVCFMSVLN. An ABC transporter 2 domain is found at 1060 to 1296; sequence IELENIYFKY…RGVYWQMCQS (237 aa). 1094-1101 serves as a coordination point for ATP; it reads GASGSGKS.

The protein belongs to the ABC transporter superfamily. ABCB family. Multidrug resistance exporter (TC 3.A.1.201) subfamily.

Its subcellular location is the cell membrane. Its function is as follows. ABC transporter; part of the gene cluster that mediates the biosynthesis of beauvericin (BEA), a non-ribosomal cyclic hexadepsipeptide that shows antibiotic, antifungal, insecticidal, and cancer cell antiproliferative and antihaptotactic activity. Functions as a regulator of beauvericin production, rather than in BEA transport out of the cell. Beauvericin has low toxicity to the producing fungus and BEA3 does not play a role in detoxification and self-protection of the producing fungus. The protein is ABC transporter BEA3 of Gibberella fujikuroi (strain CBS 195.34 / IMI 58289 / NRRL A-6831) (Bakanae and foot rot disease fungus).